The chain runs to 400 residues: MTLAFDIEARDPHSRARAGRITTAHGVIETPVFMPVGTRGSIKSLTPDEVRNHGAQIILGNTYHLYLQPGHELIARMGGLHHFMGWDGPILTDSGGFQVFSLVYGGIADEIKGRRPTQQVQPGMVKVTDDAVIFKSYIDGSMHVFTPERSIEIQKGIGADIILCFDELPPFHAGYDYTARSLERTHAWERRCLMFHRATQEGGLPFVPPNPYQALFGIVHGGVFPDLRRASAEYLRELPFDGLCIGGSLGENKQQMREVVDMTVPHMPDHLPRHLLGIGDVDDLIECVARGIDMFDCVSPTRLGRHGTALVRDAERRWKLNVANAALRDDPTPLDAWCDCYTCRRYSRAYIHHLFRAQELLGIRLVSLHNVAFLLKLMRTIRQSIIEGRFAHLRAEWLGI.

Catalysis depends on aspartate 93, which acts as the Proton acceptor. Residues 93-97 (DSGGF), aspartate 166, and glycine 247 each bind substrate. The interval 277–283 (GIGDVDD) is RNA binding. The active-site Nucleophile is the aspartate 296. Residues 301 to 305 (TRLGR) form an RNA binding; important for wobble base 34 recognition region. Cysteine 338, cysteine 340, cysteine 343, and histidine 369 together coordinate Zn(2+).

It belongs to the queuine tRNA-ribosyltransferase family. In terms of assembly, homodimer. Within each dimer, one monomer is responsible for RNA recognition and catalysis, while the other monomer binds to the replacement base PreQ1. It depends on Zn(2+) as a cofactor.

It carries out the reaction 7-aminomethyl-7-carbaguanine + guanosine(34) in tRNA = 7-aminomethyl-7-carbaguanosine(34) in tRNA + guanine. It participates in tRNA modification; tRNA-queuosine biosynthesis. Its function is as follows. Catalyzes the base-exchange of a guanine (G) residue with the queuine precursor 7-aminomethyl-7-deazaguanine (PreQ1) at position 34 (anticodon wobble position) in tRNAs with GU(N) anticodons (tRNA-Asp, -Asn, -His and -Tyr). Catalysis occurs through a double-displacement mechanism. The nucleophile active site attacks the C1' of nucleotide 34 to detach the guanine base from the RNA, forming a covalent enzyme-RNA intermediate. The proton acceptor active site deprotonates the incoming PreQ1, allowing a nucleophilic attack on the C1' of the ribose to form the product. After dissociation, two additional enzymatic reactions on the tRNA convert PreQ1 to queuine (Q), resulting in the hypermodified nucleoside queuosine (7-(((4,5-cis-dihydroxy-2-cyclopenten-1-yl)amino)methyl)-7-deazaguanosine). The sequence is that of Queuine tRNA-ribosyltransferase from Roseiflexus sp. (strain RS-1).